The sequence spans 623 residues: uncharacterized protein (623 aa).

The next 5 membrane-spanning stretches (helical) occupy residues 242 to 262 (IVLA…ITWL), 288 to 308 (IVSP…LDIF), 318 to 338 (VSMW…IALF), 361 to 381 (VINL…LLGV), and 387 to 407 (FNVS…ALAV).

This sequence belongs to the MscS (TC 1.A.23) family.

It localises to the cell membrane. This is an uncharacterized protein from Helicobacter pylori (strain ATCC 700392 / 26695) (Campylobacter pylori).